The following is a 105-amino-acid chain: MEDLSFRHPVRARADGARRSAIVGIVASGNLEVLVERVLPDAECAIDIKTAAVGFGEVWRAVIGDFVERYSPGGLKFSINDGGARPDTVSLRLAQAVRSIAENGQ.

An O-(phosphoribosyl dephospho-coenzyme A)serine modification is found at serine 28.

It belongs to the MdcC family. Post-translationally, covalently binds the prosthetic group of malonate decarboxylase.

It is found in the cytoplasm. Its function is as follows. Subunit of malonate decarboxylase, it is an acyl carrier protein to which acetyl and malonyl thioester residues are bound via a 2'-(5''-phosphoribosyl)-3'-dephospho-CoA prosthetic group and turn over during the catalytic mechanism. This Bradyrhizobium diazoefficiens (strain JCM 10833 / BCRC 13528 / IAM 13628 / NBRC 14792 / USDA 110) protein is Malonate decarboxylase acyl carrier protein.